The following is a 557-amino-acid chain: Vacuolar protein sorting-associated protein 30 (557 aa).

Disordered stretches follow at residues 93 to 149 (DDDN…ENQQ) and 218 to 238 (NKEI…SEKE). Residues 135–147 (DEEEQEATDEDEN) are compositionally biased toward acidic residues. Threonine 142 is modified (phosphothreonine). A coiled-coil region spans residues 189 to 322 (LINRLKSEYD…QLDKLRKINI (134 aa)). A BARA region spans residues 320-539 (INIFNATFKI…LAFSSNLLSK (220 aa)). The segment at 515–540 (WTTAMKFLLTNVKWLLAFSSNLLSKS) is required for membrane-association, autophagic function during starvation and normal autophagosome morphology.

It belongs to the beclin family. In terms of assembly, component of the autophagy-specific VPS34 PI3-kinase complex I composed of VPS15, VPS30, VPS34, ATG14 and ATG38; and of the VPS34 PI3-kinase complex II composed of VPS15, VPS30, VPS34 and VPS38.

The protein localises to the endosome membrane. It is found in the vacuole membrane. The protein resides in the preautophagosomal structure membrane. Functionally, required for cytoplasm to vacuole transport (Cvt), autophagy, nucleophagy, and mitophagy, as a part of the autophagy-specific VPS34 PI3-kinase complex I. This complex is essential to recruit the ATG8-phosphatidylinositol conjugate and the ATG12-ATG5 conjugate to the pre-autophagosomal structure. Also involved in endosome-to-Golgi retrograde transport as part of the VPS34 PI3-kinase complex II. This second complex is required for the endosome-to-Golgi retrieval of PEP1 and KEX2, and the recruitment of VPS5 and VPS7, two components of the retromer complex, to endosomal membranes (probably through the synthesis of a specific pool of phosphatidylinositol 3-phosphate recruiting the retromer to the endosomes). Also plays a role in regulation of filamentous growth. The sequence is that of Vacuolar protein sorting-associated protein 30 from Saccharomyces cerevisiae (strain ATCC 204508 / S288c) (Baker's yeast).